Consider the following 144-residue polypeptide: Ribonuclease H (144 aa).

Residues 1-141 enclose the RNase H type-1 domain; that stretch reads MKKVEIFTDG…ADRLASEAAD (141 aa). Mg(2+) contacts are provided by D9, E47, D69, and D133.

This sequence belongs to the RNase H family. In terms of assembly, monomer. The cofactor is Mg(2+).

The protein resides in the cytoplasm. It catalyses the reaction Endonucleolytic cleavage to 5'-phosphomonoester.. In terms of biological role, endonuclease that specifically degrades the RNA of RNA-DNA hybrids. This Erythrobacter litoralis (strain HTCC2594) protein is Ribonuclease H.